The primary structure comprises 376 residues: Histidinol-phosphate aminotransferase (376 aa).

A disordered region spans residues 1-21; that stretch reads MQPRDLSAHEPYVPGRGTKEV. Lys-222 carries the post-translational modification N6-(pyridoxal phosphate)lysine.

The protein belongs to the class-II pyridoxal-phosphate-dependent aminotransferase family. Histidinol-phosphate aminotransferase subfamily. Pyridoxal 5'-phosphate serves as cofactor.

It catalyses the reaction L-histidinol phosphate + 2-oxoglutarate = 3-(imidazol-4-yl)-2-oxopropyl phosphate + L-glutamate. It functions in the pathway amino-acid biosynthesis; L-histidine biosynthesis; L-histidine from 5-phospho-alpha-D-ribose 1-diphosphate: step 7/9. The chain is Histidinol-phosphate aminotransferase from Haloquadratum walsbyi (strain DSM 16790 / HBSQ001).